The following is a 218-amino-acid chain: RNA polymerase sigma-H factor (218 aa).

Residues 62–75 (DIVQEGMIGLYKSI) carry the Polymerase core binding motif. The segment at residues 182–201 (YQEISDELNRHVKSIDNALQ) is a DNA-binding region (H-T-H motif).

Belongs to the sigma-70 factor family. As to quaternary structure, interacts transiently with the RNAP core.

Functionally, sigma factors are initiation factors that promote the attachment of RNA polymerase (RNAP) to specific initiation sites and are then released. This sigma factor is involved in the transition to post-exponential phase in the beginning of sporulation. It is also required for transcription of several stationary phase genes. Association with the RNAP core increases rapidly in early exponential phase, and reamins constant expression level after. In Bacillus subtilis (strain 168), this protein is RNA polymerase sigma-H factor (sigH).